Reading from the N-terminus, the 1386-residue chain is DNA-directed RNA polymerase subunit beta'' (1386 aa).

4 residues coordinate Zn(2+): Cys224, Cys294, Cys301, and Cys304.

It belongs to the RNA polymerase beta' chain family. RpoC2 subfamily. In plastids the minimal PEP RNA polymerase catalytic core is composed of four subunits: alpha, beta, beta', and beta''. When a (nuclear-encoded) sigma factor is associated with the core the holoenzyme is formed, which can initiate transcription. The cofactor is Zn(2+).

It localises to the plastid. The protein localises to the chloroplast. The enzyme catalyses RNA(n) + a ribonucleoside 5'-triphosphate = RNA(n+1) + diphosphate. In terms of biological role, DNA-dependent RNA polymerase catalyzes the transcription of DNA into RNA using the four ribonucleoside triphosphates as substrates. The polypeptide is DNA-directed RNA polymerase subunit beta'' (Acorus calamus (Sweet flag)).